Reading from the N-terminus, the 541-residue chain is Putative transferase YhbX (541 aa).

At 1–60 (MTVFNKFARTFKSHWLLYLCVIVFGITNLVASSGAHMVQRLLFFVLTILVVKRISSLPLR) the chain is on the periplasmic side. A helical membrane pass occupies residues 61-81 (LLVAAPFVLLTAADMSISLYS). The Cytoplasmic segment spans residues 82 to 110 (WCTFGTTFNDGFAISVLQSDPDEVVKMLG). The helical transmembrane segment at 111-131 (MYIPYLCAFAFLSLLFLAVII) threads the bilayer. Over 132 to 141 (KYDVSLPTKK) the chain is Periplasmic. The chain crosses the membrane as a helical span at residues 142-162 (VTGILLLIVISGSLFSACQFA). Residues 163 to 264 (YKDAKNKKAF…RKQIKLFNQA (102 aa)) lie on the Cytoplasmic side of the membrane. The helical transmembrane segment at 265–285 (ISGAPYTALSVPLSLTADSVL) threads the bilayer. The Periplasmic segment spans residues 286–541 (SHDIHNYPDN…QGNPTPEGQG (256 aa)).

The protein belongs to the phosphoethanolamine transferase family.

The protein localises to the cell inner membrane. Probably does not transfer phosphoethanolamine to lipid A. The protein is Putative transferase YhbX (yhbX) of Escherichia coli (strain K12).